The sequence spans 609 residues: Myoneurin (609 aa).

The BTB domain maps to 24–89 (CDCTILIGDF…IYSGNLNYDS (66 aa)). 2 consecutive short sequence motifs (nuclear localization signal) follow at residues 172 to 188 (KKSQ…RSHQ) and 257 to 262 (QKPAKL). 8 C2H2-type zinc fingers span residues 301–323 (PVCN…MRIH), 329–351 (YVCH…VRTH), 357–380 (YQCK…RMHH), 386–408 (YKCD…ARKH), 414–436 (YVCD…VRRH), 442–464 (YVCD…ARKH), 470–492 (YICG…FRSH), and 498–521 (FVCE…LKMH). The tract at residues 528–553 (IEMKSAENSSSSEDSTTKSPEPESLE) is disordered. Residues 533 to 546 (AENSSSSEDSTTKS) are compositionally biased toward low complexity.

The protein localises to the nucleus. This Xenopus laevis (African clawed frog) protein is Myoneurin (mynn).